Consider the following 488-residue polypeptide: MSIKRSAVHTLALLAAAIFGVVLLLGAIHKDIGFMQMAAVLAVLAIGLFLLTLATAFTTKERLFMAVIYILIACTFLNNAFFAIHLGFFSLFLYRLLLIAAGCLHIFGMVRNRTHIERWHGLQVKGILLFFAFWFIYGLVSLLWAKSVTVGLKYLALLAMGIFFIYLIVMYVQKMERLMIVYAIWLVMTVFLMIIGFYNHITHHHLASSTLYSGPEYKQHYPTSVFFNQNDFATFLSISFFFYITMMKNIKNGYIKAIGLVLSLCALYLIFATGSRASLLGIFAGIAVYIFIVLPPVLKRMAIWLSAAGIALFAVLFASKIYSKFWELFLAPQTLHSFHDRLPSNVARANLLKNAWHFFLDSYGFGVGAGNVSYYLEHYAVYDTDNVAEVHNWLVEILANFGLFIMLGYLSVYAYLIWVLYKFYERKLENQSKLITEGLITAMVSFLVSSISPSSVSNLFFHWVFMALVIAAVNVLRRSRQMPEPMYR.

A run of 14 helical transmembrane segments spans residues alanine 7–histidine 29, methionine 35–phenylalanine 57, phenylalanine 64–leucine 86, leucine 91–valine 110, leucine 122–tryptophan 144, tyrosine 154–glutamine 173, isoleucine 180–threonine 202, proline 222–isoleucine 244, alanine 257–glycine 274, leucine 279–leucine 298, isoleucine 303–tyrosine 322, asparagine 354–leucine 376, isoleucine 397–valine 419, and leucine 459–leucine 476.

The protein localises to the cell membrane. Its pathway is cell wall biogenesis; teichuronic acid biosynthesis. Might be involved in the polymerization of teichuronic acid repeating units after their translocation to the outer surface of the membrane. This Bacillus subtilis (strain 168) protein is Teichuronic acid biosynthesis protein TuaE (tuaE).